The chain runs to 160 residues: SsrA-binding protein (160 aa).

This sequence belongs to the SmpB family.

The protein resides in the cytoplasm. Required for rescue of stalled ribosomes mediated by trans-translation. Binds to transfer-messenger RNA (tmRNA), required for stable association of tmRNA with ribosomes. tmRNA and SmpB together mimic tRNA shape, replacing the anticodon stem-loop with SmpB. tmRNA is encoded by the ssrA gene; the 2 termini fold to resemble tRNA(Ala) and it encodes a 'tag peptide', a short internal open reading frame. During trans-translation Ala-aminoacylated tmRNA acts like a tRNA, entering the A-site of stalled ribosomes, displacing the stalled mRNA. The ribosome then switches to translate the ORF on the tmRNA; the nascent peptide is terminated with the 'tag peptide' encoded by the tmRNA and targeted for degradation. The ribosome is freed to recommence translation, which seems to be the essential function of trans-translation. The sequence is that of SsrA-binding protein from Enterobacter sp. (strain 638).